Here is a 329-residue protein sequence, read N- to C-terminus: Gamma-resorcylate decarboxylase (329 aa).

Residues Glu8, His10, His167, and Asp290 each contribute to the Zn(2+) site. Asp290 is an active-site residue.

It belongs to the metallo-dependent hydrolases superfamily. ACMSD family. The cofactor is Zn(2+).

It catalyses the reaction 2,6-dihydroxybenzoate + H(+) = resorcinol + CO2. The protein operates within aromatic compound metabolism. In terms of biological role, involved in the gamma-resorcylate (2,6-dihydroxybenzoate) catabolism. Catalyzes the reversible decarboxylation of gamma-resorcylate to resorcinol. This is Gamma-resorcylate decarboxylase from Rhodococcus jostii (strain RHA1).